A 605-amino-acid polypeptide reads, in one-letter code: Granule-bound starch synthase 1, chloroplastic/amyloplastic (605 aa).

A chloroplast-targeting transit peptide spans 1-72 (MAALATSQLV…GGRFPSLVVC (72 aa)). Lysine 91 is a binding site for ADP-alpha-D-glucose.

It belongs to the glycosyltransferase 1 family. Bacterial/plant glycogen synthase subfamily.

The protein resides in the plastid. Its subcellular location is the chloroplast. The protein localises to the amyloplast. The enzyme catalyses an NDP-alpha-D-glucose + [(1-&gt;4)-alpha-D-glucosyl](n) = [(1-&gt;4)-alpha-D-glucosyl](n+1) + a ribonucleoside 5'-diphosphate + H(+). It functions in the pathway glycan biosynthesis; starch biosynthesis. In terms of biological role, required for the synthesis of amylose in endosperm. The sequence is that of Granule-bound starch synthase 1, chloroplastic/amyloplastic (WAXY) from Zea mays (Maize).